A 316-amino-acid chain; its full sequence is ATP synthase gamma chain (316 aa).

Belongs to the ATPase gamma chain family. As to quaternary structure, F-type ATPases have 2 components, CF(1) - the catalytic core - and CF(0) - the membrane proton channel. CF(1) has five subunits: alpha(3), beta(3), gamma(1), delta(1), epsilon(1). CF(0) has three main subunits: a, b and c.

Its subcellular location is the cellular thylakoid membrane. Produces ATP from ADP in the presence of a proton gradient across the membrane. The gamma chain is believed to be important in regulating ATPase activity and the flow of protons through the CF(0) complex. This Prochlorococcus marinus (strain MIT 9515) protein is ATP synthase gamma chain.